The sequence spans 194 residues: 5'-deoxynucleotidase VV1113 (194 aa).

Residues 18–19 and H33 each bind substrate; that span reads RW. The 113-residue stretch at 30–142 folds into the HD domain; sequence VSEHSLQVAF…VKQADSICAY (113 aa). A divalent metal cation contacts are provided by H33, H68, and D69. Substrate is bound by residues D69, 77–80, and D137; that span reads DLPT. D137 is a binding site for a divalent metal cation.

The protein belongs to the 5DNU family. Homodimer. It depends on a divalent metal cation as a cofactor.

Its subcellular location is the cytoplasm. It catalyses the reaction a 2'-deoxyribonucleoside 5'-phosphate + H2O = a 2'-deoxyribonucleoside + phosphate. Catalyzes the strictly specific dephosphorylation of 2'-deoxyribonucleoside 5'-monophosphates. The chain is 5'-deoxynucleotidase VV1113 from Vibrio vulnificus (strain YJ016).